Consider the following 105-residue polypeptide: MNLDVPYYRLGAHERVEYIPLKLALNDDAPPPAAHEYAEARAAGGEAAPPAEQWSAGVIVLIGLVAFVALFLLLYVIYYFVILRDQPQYSDDIDNDPPFAFNKFD.

This is an uncharacterized protein from Orgyia pseudotsugata multicapsid polyhedrosis virus (OpMNPV).